A 284-amino-acid chain; its full sequence is 2-dehydro-3-deoxyphosphooctonate aldolase (284 aa).

The protein belongs to the KdsA family.

The protein localises to the cytoplasm. The catalysed reaction is D-arabinose 5-phosphate + phosphoenolpyruvate + H2O = 3-deoxy-alpha-D-manno-2-octulosonate-8-phosphate + phosphate. The protein operates within carbohydrate biosynthesis; 3-deoxy-D-manno-octulosonate biosynthesis; 3-deoxy-D-manno-octulosonate from D-ribulose 5-phosphate: step 2/3. It functions in the pathway bacterial outer membrane biogenesis; lipopolysaccharide biosynthesis. This Burkholderia cenocepacia (strain ATCC BAA-245 / DSM 16553 / LMG 16656 / NCTC 13227 / J2315 / CF5610) (Burkholderia cepacia (strain J2315)) protein is 2-dehydro-3-deoxyphosphooctonate aldolase.